Consider the following 213-residue polypeptide: 3-isopropylmalate dehydratase small subunit (213 aa).

This sequence belongs to the LeuD family. LeuD type 1 subfamily. Heterodimer of LeuC and LeuD.

The catalysed reaction is (2R,3S)-3-isopropylmalate = (2S)-2-isopropylmalate. It functions in the pathway amino-acid biosynthesis; L-leucine biosynthesis; L-leucine from 3-methyl-2-oxobutanoate: step 2/4. Its function is as follows. Catalyzes the isomerization between 2-isopropylmalate and 3-isopropylmalate, via the formation of 2-isopropylmaleate. The chain is 3-isopropylmalate dehydratase small subunit from Magnetococcus marinus (strain ATCC BAA-1437 / JCM 17883 / MC-1).